A 456-amino-acid polypeptide reads, in one-letter code: Keratin, type I cuticular Ha8 (456 aa).

Residues 1–104 (MTSSYSSSSC…YGENTLNGHE (104 aa)) are head. In terms of domain architecture, IF rod spans 104–415 (EKETMQFLND…NLLESEDCKL (312 aa)). The interval 105 to 139 (KETMQFLNDRLANYLEKVRQLEQENAELEATLLER) is coil 1A. Residues 140–150 (SKCHESTVCPD) form a linker 1 region. A coil 1B region spans residues 151–251 (YQSYFHTIEE…HEQEVKILRS (101 aa)). Positions 252–267 (QLGEKLRIELDIEPTI) are linker 12. Residues 268–411 (DLNRVLGEMR…ATYRNLLESE (144 aa)) form a coil 2 region. The tail stretch occupies residues 412 to 456 (DCKLPCNPCSTSPSCVTAPCAPRPSCGPCTTCGPTCGASTTGSRF).

Belongs to the intermediate filament family.

This chain is Keratin, type I cuticular Ha8 (KRT38), found in Homo sapiens (Human).